Here is a 212-residue protein sequence, read N- to C-terminus: Ras-related protein Rab-2A (212 aa).

Ala-2 is modified (N-acetylalanine). Residues 2-19 (AYAYLFKYIIIGDTGVGK) are required for interaction with PRKCI. GTP is bound by residues Gly-16, Val-17, Gly-18, Lys-19, Ser-20, Cys-21, and Thr-38. Ser-20 is a binding site for Mg(2+). A Switch 1 motif is present at residues 37 to 42 (LTIGVE). Mg(2+) is bound by residues Thr-38 and Asp-61. The Switch 2 motif lies at 63 to 72 (AGQESFRSIT). Residues Gly-64, Asn-119, Lys-120, Asp-122, Ala-150, and Lys-151 each contribute to the GTP site. 2 S-geranylgeranyl cysteine lipidation sites follow: Cys-211 and Cys-212.

This sequence belongs to the small GTPase superfamily. Rab family. As to quaternary structure, interacts with PRKCI. Interacts with TRIP11. Interacts (in GTP-bound form) with GARIN1B. Interacts (GTP-bound) with HOPS complex component VPS39; interaction contributes to obtaining a functional HOPS complex that promotes autophagosome-lysosome membrane fusion driven by STX17-SNAP29-VAMP8. May interact with VPS41. Mg(2+) serves as cofactor. Post-translationally, prenylated. Prenylation is required for association with cellular membranes. Brain and parietal cells.

It is found in the endoplasmic reticulum-Golgi intermediate compartment membrane. The protein resides in the melanosome. The protein localises to the endoplasmic reticulum membrane. Its subcellular location is the golgi apparatus membrane. It localises to the cytoplasmic vesicle. It is found in the secretory vesicle. The protein resides in the acrosome. The protein localises to the autophagosome membrane. The enzyme catalyses GTP + H2O = GDP + phosphate + H(+). Regulated by guanine nucleotide exchange factors (GEFs) which promote the exchange of bound GDP for free GTP, GTPase activating proteins (GAPs) which increase the GTP hydrolysis activity, and GDP dissociation inhibitors (GDIs) which inhibit the dissociation of the nucleotide from the GTPase. The small GTPases Rab are key regulators of intracellular membrane trafficking, from the formation of transport vesicles to their fusion with membranes. Rabs cycle between active GTP-bound and inactive GDP-bound states. In their active state, drive transport of vesicular carriers from donor organelles to acceptor organelles to regulate the membrane traffic that maintains organelle identity and morphology. RAB2A regulates autophagy by promoting autophagosome-lysosome fusion via recruitment of the HOPS endosomal tethering complex; this process involves autophagosomal RAB2A and lysosomal RAB39A recruitment of HOPS subcomplexes VPS39-VPS11 and VPS41-VPS16-VPS18-VPS33A, respectively, which assemble into a functional complex to mediate membrane tethering and SNAREs-driven membrane fusion. Required for protein transport from the endoplasmic reticulum to the Golgi complex. Regulates the compacted morphology of the Golgi. Together with RAB2B, redundantly required for efficient autophagic flux. The sequence is that of Ras-related protein Rab-2A (RAB2A) from Oryctolagus cuniculus (Rabbit).